The primary structure comprises 332 residues: tRNA uridine(34) hydroxylase (332 aa).

Residues Ser-123–Ser-217 enclose the Rhodanese domain. The active-site Cysteine persulfide intermediate is the Cys-177. Residues Ser-302 to Lys-332 are disordered. Residues Ser-310–Lys-319 are compositionally biased toward basic and acidic residues.

It belongs to the TrhO family.

It catalyses the reaction uridine(34) in tRNA + AH2 + O2 = 5-hydroxyuridine(34) in tRNA + A + H2O. In terms of biological role, catalyzes oxygen-dependent 5-hydroxyuridine (ho5U) modification at position 34 in tRNAs. The protein is tRNA uridine(34) hydroxylase of Shewanella woodyi (strain ATCC 51908 / MS32).